Consider the following 332-residue polypeptide: Anthranilate phosphoribosyltransferase (332 aa).

5-phospho-alpha-D-ribose 1-diphosphate is bound by residues G79, 82–83, T87, 89–92, 107–115, and A119; these read GD, NIST, and KHGNYGATS. Residue G79 coordinates anthranilate. S91 lines the Mg(2+) pocket. N110 serves as a coordination point for anthranilate. R165 is a binding site for anthranilate. Positions 223 and 224 each coordinate Mg(2+).

Belongs to the anthranilate phosphoribosyltransferase family. Homodimer. Mg(2+) is required as a cofactor.

The catalysed reaction is N-(5-phospho-beta-D-ribosyl)anthranilate + diphosphate = 5-phospho-alpha-D-ribose 1-diphosphate + anthranilate. The protein operates within amino-acid biosynthesis; L-tryptophan biosynthesis; L-tryptophan from chorismate: step 2/5. Functionally, catalyzes the transfer of the phosphoribosyl group of 5-phosphorylribose-1-pyrophosphate (PRPP) to anthranilate to yield N-(5'-phosphoribosyl)-anthranilate (PRA). The sequence is that of Anthranilate phosphoribosyltransferase from Bacteroides thetaiotaomicron (strain ATCC 29148 / DSM 2079 / JCM 5827 / CCUG 10774 / NCTC 10582 / VPI-5482 / E50).